Here is a 180-residue protein sequence, read N- to C-terminus: Cytidylate kinase (180 aa).

Residue 7-15 (GPPGSGTTT) coordinates ATP.

The protein belongs to the cytidylate kinase family. Type 2 subfamily.

Its subcellular location is the cytoplasm. It catalyses the reaction CMP + ATP = CDP + ADP. The catalysed reaction is dCMP + ATP = dCDP + ADP. The sequence is that of Cytidylate kinase (cmk) from Archaeoglobus fulgidus (strain ATCC 49558 / DSM 4304 / JCM 9628 / NBRC 100126 / VC-16).